Here is a 162-residue protein sequence, read N- to C-terminus: uncharacterized protein (162 aa).

A helical membrane pass occupies residues Ser6–Phe24.

It localises to the membrane. This is an uncharacterized protein from Caenorhabditis elegans.